The chain runs to 249 residues: Phosphoadenosine 5'-phosphosulfate reductase (249 aa).

C230 (nucleophile; cysteine thiosulfonate intermediate) is an active-site residue.

Belongs to the PAPS reductase family. CysH subfamily.

Its subcellular location is the cytoplasm. It catalyses the reaction [thioredoxin]-disulfide + sulfite + adenosine 3',5'-bisphosphate + 2 H(+) = [thioredoxin]-dithiol + 3'-phosphoadenylyl sulfate. The protein operates within sulfur metabolism; hydrogen sulfide biosynthesis; sulfite from sulfate: step 3/3. Catalyzes the formation of sulfite from phosphoadenosine 5'-phosphosulfate (PAPS) using thioredoxin as an electron donor. This Synechocystis sp. (strain ATCC 27184 / PCC 6803 / Kazusa) protein is Phosphoadenosine 5'-phosphosulfate reductase.